The sequence spans 721 residues: Sodium/hydrogen exchanger 6 (721 aa).

Positions 1–44 are disordered; that stretch reads MTSPKPWARSAGSCQTQRAVRTRKKECREEGESDTEKGPAASSA. Over residues 26-37 the composition is skewed to basic and acidic residues; that stretch reads ECREEGESDTEK. Transmembrane regions (helical) follow at residues 91-111, 123-143, 196-216, 231-251, 272-292, 298-318, 344-364, 388-412, 434-454, 456-476, 499-519, and 535-555; these read SANL…IWLF, GLAM…IHVP, VTFD…FYAG, ILAY…SIMY, CLLF…AIFH, VELY…AIVL, IGIF…TGVV, MSWS…FCGI, FELL…LTLF, FQNH…IFLG, NFQH…ALAI, and LLIV…MLSC.

Belongs to the monovalent cation:proton antiporter 1 (CPA1) transporter (TC 2.A.36) family. In terms of assembly, homodimer. Interacts with RACK1; regulates the distribution of SLC9A6 between endosomes and the plasma membrane. Ubiquitinated (in vitro). In terms of processing, glycosylated.

Its subcellular location is the endosome membrane. It localises to the recycling endosome membrane. It is found in the early endosome membrane. The protein resides in the late endosome membrane. The protein localises to the cell membrane. It catalyses the reaction Na(+)(in) + H(+)(out) = Na(+)(out) + H(+)(in). The enzyme catalyses K(+)(in) + H(+)(out) = K(+)(out) + H(+)(in). Its function is as follows. Endosomal Na(+), K(+)/H(+) antiporter. Mediates the electroneutral exchange of endosomal luminal H(+) for a cytosolic Na(+) or K(+). By facilitating proton efflux, SLC9A6 counteracts the acidity generated by vacuolar (V)-ATPase, thereby limiting luminal acidification. Responsible for alkalizing and maintaining the endosomal pH, and consequently in, e.g., endosome maturation and trafficking of recycling endosomal cargo. Plays a critical role during neurodevelopment by regulating synaptic development and plasticity. Implicated in the maintenance of cell polarity in a manner that is dependent on its ability to modulate intravesicular pH. Regulates intracelular pH in some specialized cells, osteoclasts and stereocilia where this transporter localizes to the plasma membrane. The chain is Sodium/hydrogen exchanger 6 from Rattus norvegicus (Rat).